The primary structure comprises 325 residues: Glutarate 2-hydroxylase (325 aa).

His160, Asp162, and His292 together coordinate Fe cation.

Belongs to the glutarate hydroxylase family. Homotetramer. Fe(2+) serves as cofactor.

It carries out the reaction glutarate + 2-oxoglutarate + O2 = (S)-2-hydroxyglutarate + succinate + CO2. The protein operates within amino-acid degradation. In terms of biological role, acts as an alpha-ketoglutarate-dependent dioxygenase catalyzing hydroxylation of glutarate (GA) to L-2-hydroxyglutarate (L2HG). Functions in a L-lysine degradation pathway that proceeds via cadaverine, glutarate and L-2-hydroxyglutarate. The polypeptide is Glutarate 2-hydroxylase (Escherichia coli O17:K52:H18 (strain UMN026 / ExPEC)).